Reading from the N-terminus, the 411-residue chain is Glycerol-3-phosphate dehydrogenase [NAD(+)] (411 aa).

Residues 71 to 76, phenylalanine 103, and phenylalanine 159 each bind NAD(+); that span reads GSGNWG. Lysine 182 is a substrate binding site. Alanine 215 serves as a coordination point for NAD(+). The Proton acceptor role is filled by lysine 275. NAD(+)-binding residues include arginine 340 and glutamine 369. A substrate-binding site is contributed by 340–341; it reads RN.

This sequence belongs to the NAD-dependent glycerol-3-phosphate dehydrogenase family.

The enzyme catalyses sn-glycerol 3-phosphate + NAD(+) = dihydroxyacetone phosphate + NADH + H(+). This is Glycerol-3-phosphate dehydrogenase [NAD(+)] (GPD) from Lachancea thermotolerans (Yeast).